Here is a 176-residue protein sequence, read N- to C-terminus: uncharacterized protein (176 aa).

This is an uncharacterized protein from Schizosaccharomyces pombe (strain 972 / ATCC 24843) (Fission yeast).